A 1043-amino-acid chain; its full sequence is Ras guanine nucleotide exchange factor S (1043 aa).

The stretch at isoleucine 109–leucine 142 forms a coiled coil. Composition is skewed to low complexity over residues glutamine 135–isoleucine 145, leucine 245–serine 258, serine 266–serine 281, and asparagine 293–serine 307. Disordered regions lie at residues glutamine 135 to isoleucine 160 and leucine 245 to glutamine 316. A coiled-coil region spans residues leucine 404–glutamate 434. In terms of domain architecture, N-terminal Ras-GEF spans lysine 645 to isoleucine 768. The Ras-GEF domain maps to serine 803–lysine 1043.

Its function is as follows. Promotes the exchange of Ras-bound GDP by GTP. In Dictyostelium discoideum (Social amoeba), this protein is Ras guanine nucleotide exchange factor S (gefS).